The following is a 310-amino-acid chain: Signal peptidase I (310 aa).

The helical transmembrane segment at 5-25 (LSSFLLASSLITGTLWIINKI) threads the bilayer. Over 26-57 (LSHNLLDSKIPFNIKKSKIYYKSKQVVQTFAS) the chain is Cytoplasmic. A helical membrane pass occupies residues 58–78 (FFPILIIVFIIRTFICEPFQI). Over 79–310 (PSESMMPTLL…IQFDRIGNIY (232 aa)) the chain is Extracellular. Active-site residues include Ser82 and Lys137.

Belongs to the peptidase S26 family.

The protein resides in the cell membrane. It carries out the reaction Cleavage of hydrophobic, N-terminal signal or leader sequences from secreted and periplasmic proteins.. This chain is Signal peptidase I (lepB), found in Buchnera aphidicola subsp. Baizongia pistaciae (strain Bp).